A 209-amino-acid polypeptide reads, in one-letter code: Uracil phosphoribosyltransferase (209 aa).

5-phospho-alpha-D-ribose 1-diphosphate is bound by residues arginine 77, arginine 102, and 129–137 (DPMLATGSS). Uracil is bound by residues isoleucine 192 and 197–199 (GDA). Aspartate 198 is a binding site for 5-phospho-alpha-D-ribose 1-diphosphate.

The protein belongs to the UPRTase family. The cofactor is Mg(2+).

The catalysed reaction is UMP + diphosphate = 5-phospho-alpha-D-ribose 1-diphosphate + uracil. Its pathway is pyrimidine metabolism; UMP biosynthesis via salvage pathway; UMP from uracil: step 1/1. Allosterically activated by GTP. Catalyzes the conversion of uracil and 5-phospho-alpha-D-ribose 1-diphosphate (PRPP) to UMP and diphosphate. This chain is Uracil phosphoribosyltransferase, found in Metamycoplasma hominis (Mycoplasma hominis).